The chain runs to 555 residues: E3 ubiquitin-protein ligase NEURL1B (555 aa).

Positions 38–194 (APRFHAQAKG…ITDEVQLLES (157 aa)) constitute an NHR 1 domain. At threonine 199 the chain carries Phosphothreonine. In terms of domain architecture, NHR 2 spans 279-433 (DLRFHATRGP…GVAGQLRLLG (155 aa)). Residues 436–493 (QSSPATTTPSGSLSGSQDDSDSDMTFSVNQSSSASESSLVTAPSSPLSPPVSPVFSPP) form a disordered region. The segment covering 462–480 (SVNQSSSASESSLVTAPSS) has biased composition (low complexity). Pro residues predominate over residues 481–493 (PLSPPVSPVFSPP). An RING-type zinc finger spans residues 503-543 (CTVCFDGEVDTVIYTCGHMCLCHSCGLRLKRQARACCPICR).

As to quaternary structure, interacts with JAG1, DLL1 and DLL4. As to expression, highest expression in brain, prostate and small intestine. In the brain the levels are higher in fetal than in adult stage. In the adult brain the highest levels are detected in the olfactory system, cerebellar cortex, optic nerve and the frontal lobe.

It localises to the cytoplasm. The catalysed reaction is S-ubiquitinyl-[E2 ubiquitin-conjugating enzyme]-L-cysteine + [acceptor protein]-L-lysine = [E2 ubiquitin-conjugating enzyme]-L-cysteine + N(6)-ubiquitinyl-[acceptor protein]-L-lysine.. It participates in protein modification; protein ubiquitination. Its function is as follows. E3 ubiquitin-protein ligase involved in regulation of the Notch pathway through influencing the stability and activity of several Notch ligands. This Homo sapiens (Human) protein is E3 ubiquitin-protein ligase NEURL1B (NEURL1B).